We begin with the raw amino-acid sequence, 247 residues long: 14-3-3 protein gamma (247 aa).

It belongs to the 14-3-3 family. In terms of assembly, homodimer, and heterodimer with other family members.

Its subcellular location is the cytoplasm. Its function is as follows. Adapter protein implicated in the regulation of a large spectrum of both general and specialized signaling pathways. Binds to a large number of partners, usually by recognition of a phosphoserine or phosphothreonine motif. Binding generally results in the modulation of the activity of the binding partner. The polypeptide is 14-3-3 protein gamma (YWHAG) (Gallus gallus (Chicken)).